A 375-amino-acid chain; its full sequence is Queuine tRNA-ribosyltransferase (375 aa).

The active-site Proton acceptor is Asp-90. Substrate contacts are provided by residues 90–94 (DSGGF), Asp-144, Gln-193, and Gly-220. Positions 251–257 (GVGTPED) are RNA binding. Catalysis depends on Asp-270, which acts as the Nucleophile. The interval 275–279 (TRNAR) is RNA binding; important for wobble base 34 recognition. The Zn(2+) site is built by Cys-308, Cys-310, Cys-313, and His-339.

Belongs to the queuine tRNA-ribosyltransferase family. As to quaternary structure, homodimer. Within each dimer, one monomer is responsible for RNA recognition and catalysis, while the other monomer binds to the replacement base PreQ1. The cofactor is Zn(2+).

The enzyme catalyses 7-aminomethyl-7-carbaguanine + guanosine(34) in tRNA = 7-aminomethyl-7-carbaguanosine(34) in tRNA + guanine. Its pathway is tRNA modification; tRNA-queuosine biosynthesis. Catalyzes the base-exchange of a guanine (G) residue with the queuine precursor 7-aminomethyl-7-deazaguanine (PreQ1) at position 34 (anticodon wobble position) in tRNAs with GU(N) anticodons (tRNA-Asp, -Asn, -His and -Tyr). Catalysis occurs through a double-displacement mechanism. The nucleophile active site attacks the C1' of nucleotide 34 to detach the guanine base from the RNA, forming a covalent enzyme-RNA intermediate. The proton acceptor active site deprotonates the incoming PreQ1, allowing a nucleophilic attack on the C1' of the ribose to form the product. After dissociation, two additional enzymatic reactions on the tRNA convert PreQ1 to queuine (Q), resulting in the hypermodified nucleoside queuosine (7-(((4,5-cis-dihydroxy-2-cyclopenten-1-yl)amino)methyl)-7-deazaguanosine). The chain is Queuine tRNA-ribosyltransferase from Methylibium petroleiphilum (strain ATCC BAA-1232 / LMG 22953 / PM1).